The primary structure comprises 541 residues: Carboxypeptidase Y homolog A (541 aa).

Residues 1-17 (MKLLMTGLLASAAVAAA) form the signal peptide. A propeptide spanning residues 18 to 122 (QEQQVLQAEG…KLQSYDLRVK (105 aa)) is cleaved from the precursor. Cystine bridges form between C177–C417, C311–C325, C335–C358, C342–C351, and C380–C387. Residue N208 is glycosylated (N-linked (GlcNAc...) asparagine). The active site involves S264. The active site involves D456. N-linked (GlcNAc...) asparagine glycosylation occurs at N507. The active site involves H518.

This sequence belongs to the peptidase S10 family.

It is found in the vacuole. It carries out the reaction Release of a C-terminal amino acid with broad specificity.. In terms of biological role, vacuolar carboxypeptidase involved in degradation of small peptides. Digests preferentially peptides containing an aliphatic or hydrophobic residue in P1' position, as well as methionine, leucine or phenylalanine in P1 position of ester substrate. The sequence is that of Carboxypeptidase Y homolog A (CPYA) from Arthroderma otae (strain ATCC MYA-4605 / CBS 113480) (Microsporum canis).